Reading from the N-terminus, the 220-residue chain is Ribonuclease HII (220 aa).

Positions 16–216 constitute an RNase H type-2 domain; sequence PVFAGIDEAG…VRPNPAAEEQ (201 aa). A divalent metal cation contacts are provided by Asp-22, Glu-23, and Asp-114.

Belongs to the RNase HII family. The cofactor is Mn(2+). Mg(2+) serves as cofactor.

It localises to the cytoplasm. The enzyme catalyses Endonucleolytic cleavage to 5'-phosphomonoester.. Its function is as follows. Endonuclease that specifically degrades the RNA of RNA-DNA hybrids. The protein is Ribonuclease HII of Nitratidesulfovibrio vulgaris (strain ATCC 29579 / DSM 644 / CCUG 34227 / NCIMB 8303 / VKM B-1760 / Hildenborough) (Desulfovibrio vulgaris).